The sequence spans 407 residues: Multifunctional CCA protein (407 aa).

Residues G8 and R11 each coordinate ATP. Residues G8 and R11 each contribute to the CTP site. The Mg(2+) site is built by D21 and D23. Residues R91, R137, and R140 each coordinate ATP. Residues R91, R137, and R140 each contribute to the CTP site. Positions 228–329 constitute an HD domain; the sequence is TGMHTLMVSQ…IKIFDKMDLW (102 aa).

Belongs to the tRNA nucleotidyltransferase/poly(A) polymerase family. Bacterial CCA-adding enzyme type 1 subfamily. In terms of assembly, monomer. Can also form homodimers and oligomers. Mg(2+) serves as cofactor. Ni(2+) is required as a cofactor.

It carries out the reaction a tRNA precursor + 2 CTP + ATP = a tRNA with a 3' CCA end + 3 diphosphate. The enzyme catalyses a tRNA with a 3' CCA end + 2 CTP + ATP = a tRNA with a 3' CCACCA end + 3 diphosphate. Catalyzes the addition and repair of the essential 3'-terminal CCA sequence in tRNAs without using a nucleic acid template. Adds these three nucleotides in the order of C, C, and A to the tRNA nucleotide-73, using CTP and ATP as substrates and producing inorganic pyrophosphate. tRNA 3'-terminal CCA addition is required both for tRNA processing and repair. Also involved in tRNA surveillance by mediating tandem CCA addition to generate a CCACCA at the 3' terminus of unstable tRNAs. While stable tRNAs receive only 3'-terminal CCA, unstable tRNAs are marked with CCACCA and rapidly degraded. The protein is Multifunctional CCA protein of Aliivibrio salmonicida (strain LFI1238) (Vibrio salmonicida (strain LFI1238)).